The chain runs to 323 residues: Thymidine kinase (323 aa).

11–18 is an ATP binding site; that stretch reads GPHGLGKT. Glu-36 functions as the Proton acceptor in the catalytic mechanism. 2 residues coordinate substrate: Tyr-54 and Gln-78. Arg-169 serves as a coordination point for ATP. A substrate-binding site is contributed by Arg-175.

The protein belongs to the herpesviridae thymidine kinase family. As to quaternary structure, homodimer.

It carries out the reaction thymidine + ATP = dTMP + ADP + H(+). In terms of biological role, catalyzes the transfer of the gamma-phospho group of ATP to thymidine to generate dTMP in the salvage pathway of pyrimidine synthesis. The dTMP serves as a substrate for DNA polymerase during viral DNA replication. Allows the virus to be reactivated and to grow in non-proliferative cells lacking a high concentration of phosphorylated nucleic acid precursors. This Bos taurus (Bovine) protein is Thymidine kinase.